A 474-amino-acid polypeptide reads, in one-letter code: Type I restriction enzyme EcoBI specificity subunit (474 aa).

This sequence belongs to the type-I restriction system S methylase family. In terms of assembly, the type I restriction/modification system is composed of three polypeptides R, M and S. The restriction enzyme has stoichiometry R(2)M(2)S(1) while the methyltransferase is M(2)S(1).

In terms of biological role, the specificity (S) subunit of a type I restriction enzyme; this subunit dictates DNA sequence specificity. The M and S subunits together form a methyltransferase (MTase) that methylates A-3 on the top strand and A-4 on the bottom strand of the sequence 5'-TGAN(8)TGCT-3'. In the presence of the R subunit the complex can also act as an endonuclease, binding to the same target sequence but cutting the DNA some distance from this site. Whether the DNA is cut or modified depends on the methylation state of the target sequence. When the target site is unmodified, the DNA is cut. When the target site is hemimethylated, the complex acts as a maintenance MTase modifying the DNA so that both strands become methylated. After locating a non-methylated recognition site, the enzyme complex serves as a molecular motor that translocates DNA in an ATP-dependent manner until a collision occurs that triggers cleavage. This is Type I restriction enzyme EcoBI specificity subunit from Escherichia coli.